The sequence spans 387 residues: Sharpin (387 aa).

The interval 1-180 (MAPPAGGAAA…EREELAGSLA (180 aa)) is self-association. Positions 122-132 (EGQNGSKSNSP) are enriched in polar residues. Residues 122-169 (EGQNGSKSNSPPALGPEACPVSLPSPPEASTLKGPPPEADLPRSPGNL) form a disordered region. At Ser165 the chain carries Phosphoserine. The segment at 175 to 310 (LAGSLARAIA…SAPREAPATG (136 aa)) is interaction with SHANK1. Positions 219–288 (IRLQVTLEDA…PERSLASYGV (70 aa)) constitute a Ubiquitin-like domain. Positions 305–349 (EAPATGPSPQHPQKMDGELGRLFPPSLGLPPGPQPAASSLPSPLQ) are disordered. The residue at position 312 (Ser312) is a Phosphoserine. Low complexity predominate over residues 339-349 (PAASSLPSPLQ). Residues 348–377 (LQPSWSCPSCTFINAPDRPGCEMCSTQRPC) form a RanBP2-type zinc finger.

Monomer and homodimer. Component of the LUBAC complex (linear ubiquitin chain assembly complex) which consists of SHARPIN, RBCK1 and RNF31. LUBAC has a MW of approximately 600 kDa suggesting a heteromultimeric assembly of its subunits. Associates with the TNF-R1 signaling complex (TNF-RSC) in a stimulation-dependent manner. Interacts with EYA1, EYA2, SHANK1 and SHANK3 (via ANK repeats). As to expression, highly expressed in skeletal muscle and placenta and at lower levels in brain, heart, colon without mucosa, thymus, spleen, kidney, liver, small intestine, lung and peripheral blood leukocytes. Up-regulated in various tumor tissues such as kidney, liver, ovary and pancreas tumors.

The protein localises to the cytoplasm. It localises to the cytosol. It is found in the synapse. Its pathway is protein modification; protein ubiquitination. Functionally, component of the LUBAC complex which conjugates linear polyubiquitin chains in a head-to-tail manner to substrates and plays a key role in NF-kappa-B activation and regulation of inflammation. LUBAC conjugates linear polyubiquitin to IKBKG and RIPK1 and is involved in activation of the canonical NF-kappa-B and the JNK signaling pathways. Linear ubiquitination mediated by the LUBAC complex interferes with TNF-induced cell death and thereby prevents inflammation. LUBAC is recruited to the TNF-R1 signaling complex (TNF-RSC) following polyubiquitination of TNF-RSC components by BIRC2 and/or BIRC3 and to conjugate linear polyubiquitin to IKBKG and possibly other components contributing to the stability of the complex. The LUBAC complex is also involved in innate immunity by conjugating linear polyubiquitin chains at the surface of bacteria invading the cytosol to form the ubiquitin coat surrounding bacteria. LUBAC is not able to initiate formation of the bacterial ubiquitin coat, and can only promote formation of linear polyubiquitins on pre-existing ubiquitin. The bacterial ubiquitin coat acts as an 'eat-me' signal for xenophagy and promotes NF-kappa-B activation. Together with OTULIN, the LUBAC complex regulates the canonical Wnt signaling during angiogenesis. The chain is Sharpin from Homo sapiens (Human).